Consider the following 705-residue polypeptide: Glycine--tRNA ligase beta subunit (705 aa).

The protein belongs to the class-II aminoacyl-tRNA synthetase family. In terms of assembly, tetramer of two alpha and two beta subunits.

The protein localises to the cytoplasm. It catalyses the reaction tRNA(Gly) + glycine + ATP = glycyl-tRNA(Gly) + AMP + diphosphate. This is Glycine--tRNA ligase beta subunit from Persephonella marina (strain DSM 14350 / EX-H1).